The chain runs to 309 residues: Taste receptor type 2 member 66 (309 aa).

A topological domain (extracellular) is located at residue M1. Residues 2–22 (ITFLPIIFSILIVVTFVIGNF) traverse the membrane as a helical segment. The Cytoplasmic segment spans residues 23-46 (ANGFIALANSIEWFKRQKISFADQ). Residues 47–67 (ILTALAVPRVGLLWVLLLNWY) form a helical membrane-spanning segment. The Extracellular segment spans residues 68 to 86 (ATELNPAFYSIEVRITAYN). Residues 87-107 (LWAVINHFSNWLATSLSIFYL) form a helical membrane-spanning segment. Residues 108-126 (LKIANFSNLIFLRLKRRVK) lie on the Cytoplasmic side of the membrane. The chain crosses the membrane as a helical span at residues 127–147 (SVVLVILLGPLLFLVCHLFVI). Over 148–178 (NMNQIIWTKEYEGNMTWKIKLRSAMYLSNTT) the chain is Extracellular. N161 and N176 each carry an N-linked (GlcNAc...) asparagine glycan. Residues 179–199 (VTILANLVPFTVTLISFLLLV) traverse the membrane as a helical segment. Topologically, residues 200-229 (CSLCKHLKKMQLHGKGSQDPSTKVHIKALQ) are cytoplasmic. The helical transmembrane segment at 230 to 250 (TVISFLLLCAIYFVSVIISVW) threads the bilayer. Residues 251–259 (SFKNLENKP) are Extracellular-facing. The helical transmembrane segment at 260–280 (VFMFCQAIGFSCSSAHPFILI) threads the bilayer. The Cytoplasmic segment spans residues 281-309 (WGNKKLKQPFLSVLWQMRYWVKGEKPSSS).

It belongs to the G-protein coupled receptor T2R family.

The protein localises to the membrane. Receptor that may play a role in the perception of bitterness and is gustducin-linked. May play a role in sensing the chemical composition of the gastrointestinal content. The activity of this receptor may stimulate alpha gustducin, mediate PLC-beta-2 activation and lead to the gating of TRPM5. This is Taste receptor type 2 member 66 (TAS2R66) from Pan paniscus (Pygmy chimpanzee).